The following is a 518-amino-acid chain: Homoserine O-acetyltransferase (518 aa).

The AB hydrolase-1 domain occupies 69 to 468 (NVMVICHALT…DSPEGHDAFL (400 aa)). The active site involves Ser-182. Ser-182 (nucleophile) is an active-site residue. The segment at 267-365 (RFGRNIPDPS…PNSVSDPFRP (99 aa)) is disordered. The span at 290-303 (PAEEHYDIHNEGFR) shows a compositional bias: basic and acidic residues. Residues 310 to 341 (RSSTTTSDAPPSPTRTSSTSSTDAITPASTTP) are compositionally biased toward low complexity. Active-site residues include Asp-435 and His-464.

Belongs to the AB hydrolase superfamily. MetX family.

The catalysed reaction is L-homoserine + acetyl-CoA = O-acetyl-L-homoserine + CoA. Its pathway is amino-acid biosynthesis; L-methionine biosynthesis via de novo pathway; O-acetyl-L-homoserine from L-homoserine: step 1/1. In terms of biological role, commits homoserine to the methionine biosynthesis pathway by catalyzing its O-acetylation. This is Homoserine O-acetyltransferase (MET2) from Ascobolus immersus.